Here is a 285-residue protein sequence, read N- to C-terminus: Probable endonuclease 4 (285 aa).

Residues His-69, His-109, Glu-145, Asp-179, His-182, His-216, Asp-229, His-231, and Glu-261 each contribute to the Zn(2+) site.

Belongs to the AP endonuclease 2 family. Zn(2+) serves as cofactor.

The catalysed reaction is Endonucleolytic cleavage to 5'-phosphooligonucleotide end-products.. Endonuclease IV plays a role in DNA repair. It cleaves phosphodiester bonds at apurinic or apyrimidinic (AP) sites, generating a 3'-hydroxyl group and a 5'-terminal sugar phosphate. The protein is Probable endonuclease 4 of Shigella flexneri serotype 5b (strain 8401).